A 189-amino-acid polypeptide reads, in one-letter code: Elongation factor P (189 aa).

Belongs to the elongation factor P family.

It localises to the cytoplasm. It participates in protein biosynthesis; polypeptide chain elongation. Functionally, involved in peptide bond synthesis. Stimulates efficient translation and peptide-bond synthesis on native or reconstituted 70S ribosomes in vitro. Probably functions indirectly by altering the affinity of the ribosome for aminoacyl-tRNA, thus increasing their reactivity as acceptors for peptidyl transferase. This Rhizobium etli (strain ATCC 51251 / DSM 11541 / JCM 21823 / NBRC 15573 / CFN 42) protein is Elongation factor P.